Reading from the N-terminus, the 624-residue chain is Phragmoplastin DRP1E (624 aa).

Thr-2 bears the N-acetylthreonine mark. The 270-residue stretch at 37-306 folds into the Dynamin-type G domain; the sequence is WEALPTVAVV…LESVIRTRIP (270 aa). Residues 47-54 form a G1 motif region; it reads GGQSSGKS. A GTP-binding site is contributed by 50 to 55; sequence SSGKSS. The interval 73–75 is G2 motif; sequence VTR. Residues 148 to 151 form a G3 motif region; that stretch reads DLPG. A G4 motif region spans residues 217 to 220; that stretch reads TKLD. GTP-binding positions include 218-223 and 248-251; these read KLDLMD and NRSQ. The G5 motif stretch occupies residues 247–250; it reads VNRS. The 93-residue stretch at 532–624 folds into the GED domain; the sequence is FRRIASNVSA…DEIDAVAWVR (93 aa).

The protein belongs to the TRAFAC class dynamin-like GTPase superfamily. Dynamin/Fzo/YdjA family. As to quaternary structure, forms homodimer and may homooligomerize and heterooligomerize to form the phragmoplastin complex. Binds to PHIP1. Ubiquitous.

The protein resides in the cytoplasm. The protein localises to the cytoskeleton. Its subcellular location is the phragmoplast. The catalysed reaction is GTP + H2O = GDP + phosphate + H(+). Its function is as follows. Microtubule-associated force-producing protein that is targeted to the tubulo-vesicular network of the forming cell plate during cytokinesis. Also plays a major role in plasma membrane maintenance and cell wall integrity with an implication in vesicular trafficking, polar cell expansion, and other aspects of plant growth and development. Has a GTPase activity. The sequence is that of Phragmoplastin DRP1E from Arabidopsis thaliana (Mouse-ear cress).